Reading from the N-terminus, the 860-residue chain is Alanine--tRNA ligase (860 aa).

Positions 563, 567, 665, and 669 each coordinate Zn(2+).

This sequence belongs to the class-II aminoacyl-tRNA synthetase family. It depends on Zn(2+) as a cofactor.

The protein localises to the cytoplasm. The catalysed reaction is tRNA(Ala) + L-alanine + ATP = L-alanyl-tRNA(Ala) + AMP + diphosphate. Catalyzes the attachment of alanine to tRNA(Ala) in a two-step reaction: alanine is first activated by ATP to form Ala-AMP and then transferred to the acceptor end of tRNA(Ala). Also edits incorrectly charged Ser-tRNA(Ala) and Gly-tRNA(Ala) via its editing domain. In Vibrio parahaemolyticus serotype O3:K6 (strain RIMD 2210633), this protein is Alanine--tRNA ligase.